Reading from the N-terminus, the 263-residue chain is Hydroxyethylthiazole kinase 1 (263 aa).

Residue methionine 42 coordinates substrate. Positions 118 and 164 each coordinate ATP. Residue glycine 191 participates in substrate binding.

Belongs to the Thz kinase family. It depends on Mg(2+) as a cofactor.

It carries out the reaction 5-(2-hydroxyethyl)-4-methylthiazole + ATP = 4-methyl-5-(2-phosphooxyethyl)-thiazole + ADP + H(+). It functions in the pathway cofactor biosynthesis; thiamine diphosphate biosynthesis; 4-methyl-5-(2-phosphoethyl)-thiazole from 5-(2-hydroxyethyl)-4-methylthiazole: step 1/1. Catalyzes the phosphorylation of the hydroxyl group of 4-methyl-5-beta-hydroxyethylthiazole (THZ). This is Hydroxyethylthiazole kinase 1 from Clostridium botulinum (strain Okra / Type B1).